Reading from the N-terminus, the 520-residue chain is GMP synthase [glutamine-hydrolyzing] (520 aa).

The 193-residue stretch at Lys-13–Asp-205 folds into the Glutamine amidotransferase type-1 domain. The active-site Nucleophile is the Cys-90. Residues His-179 and Glu-181 contribute to the active site. The 190-residue stretch at Trp-206 to Arg-395 folds into the GMPS ATP-PPase domain. Ser-233 to Ser-239 is an ATP binding site.

As to quaternary structure, homodimer.

It carries out the reaction XMP + L-glutamine + ATP + H2O = GMP + L-glutamate + AMP + diphosphate + 2 H(+). It participates in purine metabolism; GMP biosynthesis; GMP from XMP (L-Gln route): step 1/1. In terms of biological role, catalyzes the synthesis of GMP from XMP. The protein is GMP synthase [glutamine-hydrolyzing] of Streptococcus pneumoniae (strain P1031).